The following is a 212-amino-acid chain: Phosphatidylserine decarboxylase proenzyme (212 aa).

S182 (schiff-base intermediate with substrate; via pyruvic acid) is an active-site residue. S182 bears the Pyruvic acid (Ser); by autocatalysis mark.

Belongs to the phosphatidylserine decarboxylase family. PSD-A subfamily. In terms of assembly, heterodimer of a large membrane-associated beta subunit and a small pyruvoyl-containing alpha subunit. The cofactor is pyruvate. Post-translationally, is synthesized initially as an inactive proenzyme. Formation of the active enzyme involves a self-maturation process in which the active site pyruvoyl group is generated from an internal serine residue via an autocatalytic post-translational modification. Two non-identical subunits are generated from the proenzyme in this reaction, and the pyruvate is formed at the N-terminus of the alpha chain, which is derived from the carboxyl end of the proenzyme. The post-translation cleavage follows an unusual pathway, termed non-hydrolytic serinolysis, in which the side chain hydroxyl group of the serine supplies its oxygen atom to form the C-terminus of the beta chain, while the remainder of the serine residue undergoes an oxidative deamination to produce ammonia and the pyruvoyl prosthetic group on the alpha chain.

It localises to the cell membrane. The enzyme catalyses a 1,2-diacyl-sn-glycero-3-phospho-L-serine + H(+) = a 1,2-diacyl-sn-glycero-3-phosphoethanolamine + CO2. Its pathway is phospholipid metabolism; phosphatidylethanolamine biosynthesis; phosphatidylethanolamine from CDP-diacylglycerol: step 2/2. Catalyzes the formation of phosphatidylethanolamine (PtdEtn) from phosphatidylserine (PtdSer). The chain is Phosphatidylserine decarboxylase proenzyme from Chlorobium chlorochromatii (strain CaD3).